The following is a 533-amino-acid chain: Calcium-dependent protein kinase 19 (533 aa).

Composition is skewed to polar residues over residues 1-12 (MGSCCSRATSPD) and 24-38 (SHQTKPAQTTPSYNH). Residues 1-53 (MGSCCSRATSPDSGRGGANGYGYSHQTKPAQTTPSYNHPQPPPPAEVRYTPSA) are disordered. Glycine 2 carries N-myristoyl glycine lipidation. The Protein kinase domain occupies 85-343 (YSLGKELGRG…SAQVLQHPWL (259 aa)). ATP-binding positions include 91-99 (LGRGQFGVT) and lysine 114. Residue aspartate 209 is the Proton acceptor of the active site. The interval 348-378 (ASDKPIDSAVLSRMKQFRAMNKLKKMALKVI) is autoinhibitory domain. 4 EF-hand domains span residues 385–420 (EEIKGLKQMFTNMDTDNSGTITYEELKAGLAKLGSK), 421–456 (LSEAEVKQLMEAADVDGNGSIDYVEFITATMHRHKL), 457–492 (ERDEHLFKAFQYFDKDNSGFITRDELESALIEHEMG), and 497–527 (IKDIISEVDTDNDGRINYEEFCAMMRGGGMQ). The Ca(2+) site is built by aspartate 398, aspartate 400, serine 402, threonine 404, glutamate 409, aspartate 434, aspartate 436, asparagine 438, serine 440, glutamate 445, aspartate 470, aspartate 472, serine 474, glutamate 481, aspartate 505, aspartate 507, aspartate 509, arginine 511, and glutamate 516.

This sequence belongs to the protein kinase superfamily. Ser/Thr protein kinase family. CDPK subfamily. Expressed in root tips, leaf veins, mesophyll cells, flower reproductive organs and mature pollen grains.

The protein resides in the membrane. The catalysed reaction is L-seryl-[protein] + ATP = O-phospho-L-seryl-[protein] + ADP + H(+). The enzyme catalyses L-threonyl-[protein] + ATP = O-phospho-L-threonyl-[protein] + ADP + H(+). Its activity is regulated as follows. Activated by calcium. Autophosphorylation may play an important role in the regulation of the kinase activity. Functionally, may play a role in signal transduction pathways that involve calcium as a second messenger. The sequence is that of Calcium-dependent protein kinase 19 from Oryza sativa subsp. japonica (Rice).